A 366-amino-acid chain; its full sequence is Peptide chain release factor 2 (366 aa).

N5-methylglutamine is present on Gln249.

Belongs to the prokaryotic/mitochondrial release factor family. Methylated by PrmC. Methylation increases the termination efficiency of RF2.

It localises to the cytoplasm. Functionally, peptide chain release factor 2 directs the termination of translation in response to the peptide chain termination codons UGA and UAA. This Petrotoga mobilis (strain DSM 10674 / SJ95) protein is Peptide chain release factor 2.